The primary structure comprises 298 residues: Beta-1,3-galactosyltransferase 5 (298 aa).

Residues 1–7 (MAFPKMR) lie on the Cytoplasmic side of the membrane. Residues 8–28 (LMYICLLVLGALCLYFSMYSL) traverse the membrane as a helical; Signal-anchor for type II membrane protein segment. Residues 29–298 (NPFKEQSFVY…PRTLLDYWQA (270 aa)) lie on the Lumenal side of the membrane. Asn130, Asn174, and Asn231 each carry an N-linked (GlcNAc...) asparagine glycan.

It belongs to the glycosyltransferase 31 family.

The protein localises to the golgi apparatus membrane. It catalyses the reaction a globoside Gb4Cer (d18:1(4E)) + UDP-alpha-D-galactose = a globoside GalGb4Cer (d18:1(4E)) + UDP + H(+). It functions in the pathway protein modification; protein glycosylation. In terms of biological role, catalyzes the transfer of Gal to GlcNAc-based acceptors with a preference for the core3 O-linked glycan GlcNAc(beta1,3)GalNAc structure. Can use glycolipid LC3Cer as an efficient acceptor. This chain is Beta-1,3-galactosyltransferase 5 (B3GALT5), found in Gorilla gorilla gorilla (Western lowland gorilla).